The sequence spans 256 residues: Probable transcriptional regulatory protein A1I_03240 (256 aa).

The disordered stretch occupies residues 1 to 21 (MAGHSKFKNIQHRKGAQDKKR).

It belongs to the TACO1 family.

It is found in the cytoplasm. The sequence is that of Probable transcriptional regulatory protein A1I_03240 from Rickettsia bellii (strain OSU 85-389).